The sequence spans 654 residues: MSSIESVLTETRVFAPHETFRQAATVSGLPGYQALCDAAEQDYTGFWANLARQEISWQTPFTEVLDESNAPFYRWFADGKLNASYNCIDRHLEKRANKIALIFEADNGDVANITYRELHQRVCRFANALKKQGVGLGDRVIIYLPMSIEAIVAMQACARIGAIHSVVFGGFSAKSLHERIVDVGAKLVITADAGIRGGKQVALKASVDEALELGGCESVEKVIVYQRTGVDIAWNPHRDAWWHEVEAAENDNCEPVWVDAEHPLFILYTSGSTGTPKGVQHSTGGYLLGAIMSMKWVFDHKATDIFWCTADVGWITGHSYVAYGPLALGSTQVVFEGVPTYPDAGRFWQMIERHKVSIFYTAPTAIRSLIKLGGDLPHKYDLSSLRLLGTVGEPINPEAWMWYYKVVGKERCPIADTWWQTETGAHMIAPLPGAIDLKPGSCTRPLPGIIMDIVEEDGTHIEGTGGGLLVVKKPWPSMIRNIWGNPERFRKAYFPEELNGLYLAGDSAHRDEDGYFWIMGRIDDVLNVSGHRLGTMEIESALVANPLVAEAAIVGKPHDIKGESIVAYVVLKGERPEGEAAKTIAGQLREWVGKEIGPIAKPDEIRFGENLPKTRSGKIMRRLLRSLAKGEEITSDISTLDNPAILDQLRQSAG.

CoA contacts are provided by residues 196 to 199 (RGGK) and T316. ATP-binding positions include 392 to 394 (GEP), 416 to 421 (DTWWQT), D506, and R521. S529 contacts CoA. Residue R532 participates in ATP binding. Mg(2+) is bound by residues V543 and V548. K618 is modified (N6-acetyllysine).

Belongs to the ATP-dependent AMP-binding enzyme family. Requires Mg(2+) as cofactor. Post-translationally, acetylated. Deacetylation by the SIR2-homolog deacetylase activates the enzyme.

It catalyses the reaction acetate + ATP + CoA = acetyl-CoA + AMP + diphosphate. Functionally, catalyzes the conversion of acetate into acetyl-CoA (AcCoA), an essential intermediate at the junction of anabolic and catabolic pathways. AcsA undergoes a two-step reaction. In the first half reaction, AcsA combines acetate with ATP to form acetyl-adenylate (AcAMP) intermediate. In the second half reaction, it can then transfer the acetyl group from AcAMP to the sulfhydryl group of CoA, forming the product AcCoA. The polypeptide is Acetyl-coenzyme A synthetase (Methylobacillus flagellatus (strain ATCC 51484 / DSM 6875 / VKM B-1610 / KT)).